The chain runs to 415 residues: 6-phospho-beta-glucosidase BglT (415 aa).

Residue 1-64 participates in NAD(+) binding; that stretch reads MRIAVIGGGS…DRFKVLISDT (64 aa). Substrate-binding residues include R87 and N140. C162 is a Mn(2+) binding site. N163 provides a ligand contact to substrate. H192 is a binding site for Mn(2+). The active-site Proton acceptor is the Y241. R261 is a binding site for substrate.

It belongs to the glycosyl hydrolase 4 family. Homodimer or homotetramer. Exists in a homodimer/homotetramer equilibrium state in solution. NAD(+) serves as cofactor. Mn(2+) is required as a cofactor.

It catalyses the reaction 6-phospho-beta-D-glucosyl-(1-&gt;4)-D-glucose + H2O = D-glucose 6-phosphate + D-glucose. Its function is as follows. Hydrolyzes cellobiose 6'-phosphate into glucose 6-phosphate (Glc6P) and glucose. This is 6-phospho-beta-glucosidase BglT (bglT) from Thermotoga maritima (strain ATCC 43589 / DSM 3109 / JCM 10099 / NBRC 100826 / MSB8).